We begin with the raw amino-acid sequence, 854 residues long: Periodic tryptophan protein 2 homolog (854 aa).

WD repeat units lie at residues 9 to 52 (NLVG…TFPF), 53 to 93 (ENHK…LHYF), 94 to 132 (NFKSPVGAIEFSPNGKFFAVSLGKLIQVWRTPNSLEERE), 144 to 183 (GHFDDIVSISWSADSRFFISTSKDLTARLHSVDPIEGFHP), 188 to 227 (GHKNTVVSGFFSKDQQTIYTVSKDGALFVWKYSPLFQAGE), 252 to 291 (NQNSKLRCAAFHPTSNLLVVGFSSGLFGIYELPSFTMLYQ), 294 to 334 (ITQS…YVLK), 337 to 376 (SHYDALSTLQYSSDGQRIITGADDGKIKVWDMNSGFCIVT), 379 to 418 (QHTSAVSGLCFSKRGNVLFSSSLDGSVRAWDLIRYRNFRT), 422 to 464 (PSRV…ETLA), 465 to 504 (GHEGPVSSLSFNSSGSLLASGSWDKTVRIWDIFSRSGIVE), 507 to 546 (PIPSDVLSLAFHPDGKEVCVASLDGQLTFWNVQEGKQTSL), and 569 to 608 (SLNKTFTSICYSADGSCVLSAGTSKYVCLYDIITGVLIKK). Position 640 is a phosphothreonine (Thr-640). The residue at position 645 (Ser-645) is a Phosphoserine. The stretch at 668–709 (TRPEIICHGVQFSPSGGAFAAATTEGLMIYSLYNDFLFDPIN) is one WD 14 repeat.

The protein belongs to the WD repeat PWP2 family.

The protein is Periodic tryptophan protein 2 homolog of Schizosaccharomyces pombe (strain 972 / ATCC 24843) (Fission yeast).